The sequence spans 2104 residues: Transmembrane matrix receptor MUP-4 (2104 aa).

A signal peptide spans 1 to 15 (MRWVPLVLLPLIASA). Residues 16–1860 (ATTYQHRQTY…FCETAPSNLP (1845 aa)) lie on the Extracellular side of the membrane. 3 consecutive EGF-like domains span residues 71–110 (VVNE…TSPD), 122–163 (TTNE…VSTS), and 175–213 (SVNE…ASPN). Intrachain disulfides connect C75–C89, C83–C98, C126–C142, C136–C151, C179–C192, and C186–C201. The WR1 domain occupies 220 to 265 (RVCNKPKAPEYYGQQSRQPQCSEGSGCGPNEECRFNTAGEKVCQCR). 3 EGF-like domains span residues 278–315 (VFSQ…VSPD), 327–360 (VRNE…SNCI), and 377–416 (AANQ…VSSN). 7 cysteine pairs are disulfide-bonded: C282-C294, C288-C303, C331-C344, C338-C353, C355-C359, C381-C395, and C389-C404. One can recognise a VWFA domain in the interval 437–612 (DLVFLIDGSG…DLNTRLRSAI (176 aa)). 2 N-linked (GlcNAc...) asparagine glycosylation sites follow: N494 and N556. EGF-like domains lie at 728–772 (SNDE…NKCE) and 819–857 (LIDE…KSPE). 21 disulfide bridges follow: C732/C746, C740/C756, C758/C771, C823/C836, C830/C845, C873/C886, C880/C895, C923/C937, C931/C946, C972/C985, C979/C995, C1020/C1034, C1028/C1046, C1075/C1089, C1083/C1098, C1125/C1139, C1133/C1148, C1173/C1187, C1181/C1196, C1219/C1233, and C1227/C1242. Positions 869-907 (QRNECLDGTHNCSMNADCIDLPDGFLCRCKEDFVDISPN) constitute an EGF-like 9; calcium-binding domain. N879 carries an N-linked (GlcNAc...) asparagine glycan. EGF-like domains follow at residues 919-958 (LVNE…HDEL), 968-1007 (LNQI…KSPL), 1016-1058 (VEPI…VGAV), 1071-1110 (LVNE…ESPV), 1121-1160 (LVNE…QKPE), 1169-1208 (IINE…EMPS), and 1215-1254 (RFDE…EISD). N1037 carries N-linked (GlcNAc...) asparagine glycosylation. N1132 carries an N-linked (GlcNAc...) asparagine glycan. N-linked (GlcNAc...) asparagine glycosylation is found at N1271, N1403, and N1576. 2 SEA domains span residues 1322 to 1444 (PTTS…DDAD) and 1495 to 1620 (AVES…PEQL). EGF-like domains follow at residues 1622 to 1658 (PFSN…LNPS), 1669 to 1705 (GVNE…YVNS), and 1717 to 1754 (SIDY…LRKS). Cystine bridges form between C1626–C1637, C1631–C1646, C1673–C1687, C1681–C1696, C1721–C1733, C1727–C1742, C1776–C1789, C1783–C1798, C1821–C1830, C1824–C1841, and C1843–C1852. Residues N1730 and N1782 are each glycosylated (N-linked (GlcNAc...) asparagine). The region spanning 1772–1810 (DIDECALGLHNCSAAAICIDKKIGYECQCQEGYEDGNPS) is the EGF-like 20; calcium-binding domain. In terms of domain architecture, EGF-like 21 spans 1817–1853 (AASLCGLCNGHGDCIHDALSSNVTCACLDGYTGQFCE). N1838 is a glycosylation site (N-linked (GlcNAc...) asparagine). A helical membrane pass occupies residues 1861-1881 (LILMTLLALLFLLLTLLCCLY). Residues 1882–2104 (MCARCRCFGA…TTKAEEVNYF (223 aa)) lie on the Cytoplasmic side of the membrane. Residues 2031–2040 (SGAMMSSASG) show a composition bias toward low complexity. The tract at residues 2031-2104 (SGAMMSSASG…TTKAEEVNYF (74 aa)) is disordered. 2 stretches are compositionally biased toward basic and acidic residues: residues 2062–2076 (VYDR…HDFE) and 2083–2104 (TGTE…VNYF).

As to expression, abundant at hypodermal cell-matrix junctions overlying muscle of threefold embryos. Expression continues in body wall muscle in larvae and adults and is also detected in other regions where cells show mechanical attachment to the hypodermis including the inner surface of the pharynx, overlying anal and intestinal muscles, overlying vulval and uterine sex muscles, male tail muscle attachment zones and the six mechanosensory neurons (at protein level).

It is found in the cell junction. The protein resides in the hemidesmosome. It localises to the cytoplasm. The protein localises to the cytoskeleton. Its subcellular location is the cell membrane. In terms of biological role, required for junctional attachments between hypodermis and muscle, and between the apical epithelial surface and the cuticular matrix. Essential for enclosure of the embryo by the hypodermis, hypodermal integrity, embryo elongation, and maintenance of hypodermal morphology in fully elongated embryos. In Caenorhabditis elegans, this protein is Transmembrane matrix receptor MUP-4.